The chain runs to 299 residues: Anti-sigma-D factor RsdA (299 aa).

Residues 86–106 (LAAVGSVAAALLVLSGFGAVV) form a helical membrane-spanning segment. A disordered region spans residues 187–299 (NTKVETRDPN…APETPVSPTH (113 aa)). 2 stretches are compositionally biased toward low complexity: residues 201–212 (PGSPSNPAAPGS) and 250–271 (PNST…EPGS).

As to quaternary structure, interacts with ECF RNA polymerase sigma factor SigD; this should inhibit the interaction of SigD with the RNA polymerase catalytic core. Post-translationally, the cytosolic fragment is degraded by a ClpP1-ClpP2-ClpX complex, as would be expected after S1P and S2P intramembrane proteolysis. This releases SigD so that it may bind to the RNA polymerase catalytic core.

The protein resides in the cell membrane. Functionally, an anti-sigma factor for extracytoplasmic function (ECF) sigma factor SigD. ECF sigma factors are held in an inactive form by an anti-sigma factor until released by regulated intramembrane proteolysis (RIP). RIP occurs when an extracytoplasmic signal triggers a concerted proteolytic cascade to transmit information and elicit cellular responses. The membrane-spanning regulatory substrate protein is first cut extracytoplasmically (site-1 protease, S1P), then within the membrane itself (site-2 protease, S2P), while cytoplasmic proteases finish degrading the regulatory protein, liberating the sigma factor. Neither S1P nor S2P proteases have been so far identified for this anti-sigma factor. This Mycobacterium bovis (strain ATCC BAA-935 / AF2122/97) protein is Anti-sigma-D factor RsdA (rsda).